The following is a 354-amino-acid chain: Probable protein phosphatase 2C 69 (354 aa).

Positions 33-279 (SYGYASSAGK…DNITCVVVRF (247 aa)) constitute a PPM-type phosphatase domain. Mn(2+) is bound by residues aspartate 69, glycine 70, aspartate 231, and aspartate 270. The disordered stretch occupies residues 289-354 (HISSSSSKEA…LERNSVTDKV (66 aa)). Composition is skewed to polar residues over residues 309-328 (ISSN…PENV) and 336-348 (ASRS…LERN).

The protein belongs to the PP2C family. Mg(2+) is required as a cofactor. Requires Mn(2+) as cofactor.

The catalysed reaction is O-phospho-L-seryl-[protein] + H2O = L-seryl-[protein] + phosphate. It catalyses the reaction O-phospho-L-threonyl-[protein] + H2O = L-threonyl-[protein] + phosphate. This chain is Probable protein phosphatase 2C 69, found in Arabidopsis thaliana (Mouse-ear cress).